A 163-amino-acid chain; its full sequence is ATP synthase subunit b', chloroplastic (163 aa).

The chain crosses the membrane as a helical span at residues 26–46 (ATLPLMAVQILLFMVILNAVF).

This sequence belongs to the ATPase B chain family. In terms of assembly, F-type ATPases have 2 components, F(1) - the catalytic core - and F(0) - the membrane proton channel. F(1) has five subunits: alpha(3), beta(3), gamma(1), delta(1), epsilon(1). F(0) has four main subunits: a(1), b(1), b'(1) and c(10-14). The alpha and beta chains form an alternating ring which encloses part of the gamma chain. F(1) is attached to F(0) by a central stalk formed by the gamma and epsilon chains, while a peripheral stalk is formed by the delta, b and b' chains.

Its subcellular location is the plastid. The protein localises to the chloroplast thylakoid membrane. Its function is as follows. F(1)F(0) ATP synthase produces ATP from ADP in the presence of a proton or sodium gradient. F-type ATPases consist of two structural domains, F(1) containing the extramembraneous catalytic core and F(0) containing the membrane proton channel, linked together by a central stalk and a peripheral stalk. During catalysis, ATP synthesis in the catalytic domain of F(1) is coupled via a rotary mechanism of the central stalk subunits to proton translocation. Component of the F(0) channel, it forms part of the peripheral stalk, linking F(1) to F(0). The b'-subunit is a diverged and duplicated form of b found in plants and photosynthetic bacteria. The polypeptide is ATP synthase subunit b', chloroplastic (Guillardia theta (Cryptophyte)).